A 55-amino-acid chain; its full sequence is Large ribosomal subunit protein bL33 (55 aa).

Belongs to the bacterial ribosomal protein bL33 family.

The chain is Large ribosomal subunit protein bL33 from Aromatoleum aromaticum (strain DSM 19018 / LMG 30748 / EbN1) (Azoarcus sp. (strain EbN1)).